A 136-amino-acid polypeptide reads, in one-letter code: ATP synthase epsilon chain (136 aa).

It belongs to the ATPase epsilon chain family. As to quaternary structure, F-type ATPases have 2 components, CF(1) - the catalytic core - and CF(0) - the membrane proton channel. CF(1) has five subunits: alpha(3), beta(3), gamma(1), delta(1), epsilon(1). CF(0) has three main subunits: a, b and c.

The protein resides in the cell inner membrane. Produces ATP from ADP in the presence of a proton gradient across the membrane. This chain is ATP synthase epsilon chain, found in Afipia carboxidovorans (strain ATCC 49405 / DSM 1227 / KCTC 32145 / OM5) (Oligotropha carboxidovorans).